The chain runs to 481 residues: MKAPDSPRYEFGGPLGATGIVFGLPILMQVLYLGCNDVSGCPAPALLDPKTLSWAKLKSQIPWPQEGLSGFMSWEVTRWLFAYYFLSLMLYRIMPAQIVLGTKLRESGKPLEYRFNSFSATVVQLTGCAIGTYIYGANFPVWTWITDHYIQLLTTSTVLTYIISIWTYLRSFSIKPGNPELREVAVGGRTGRVIYDYFIGRELNPRVTLPFFGEIDIKAWLEMRPGLTGWILLNCSFIAKQYRTYGFVSDSIVVIALIQAYYVLEGQYSEAGLLSMMDITSDGLGFMLTWGDIVWVPFLYSTQCRYLSVYPVHLGPIGVGAIGTVFCIGLYIFRSSNNQKALFRKDPNNPAFANMTYIQTKRGTKLLTGGWWGMARHVNYLGDWIQSLPFCLPTKAAGYVILPAGTAVAGAEVAKMLDGRLVTPGDAAPWGMLFTYLYSAWFGFLLIHRERRDDYACSEKYGKDWEEYKNKVRWRVLPGVY.

A run of 8 helical transmembrane segments spans residues 11 to 31 (FGGP…MQVL), 80 to 100 (LFAY…QIVL), 125 to 145 (LTGC…WTWI), 149 to 169 (YIQL…WTYL), 244 to 264 (TYGF…YYVL), 279 to 299 (ITSD…VPFL), 313 to 333 (HLGP…LYIF), and 427 to 447 (AAPW…FLLI).

The protein belongs to the ERG4/ERG24 family.

It is found in the endoplasmic reticulum membrane. The catalysed reaction is 4,4-dimethyl-5alpha-cholesta-8,24-dien-3beta-ol + NADP(+) = 4,4-dimethyl-5alpha-cholesta-8,14,24-trien-3beta-ol + NADPH + H(+). The protein operates within steroid metabolism; ergosterol biosynthesis. Its function is as follows. Delta(14)-sterol reductase; part of the third module of ergosterol biosynthesis pathway that includes the late steps of the pathway. Catalyzes the reduction of the C14=C15 double bond within 4,4,24-trimethyl ergosta-8,14,24(28)-trienolto produce 4,4-dimethylfecosterol. The third module or late pathway involves the ergosterol synthesis itself through consecutive reactions that mainly occur in the endoplasmic reticulum (ER) membrane. Firstly, the squalene synthase ERG9 catalyzes the condensation of 2 farnesyl pyrophosphate moieties to form squalene, which is the precursor of all steroids. Squalene synthase is crucial for balancing the incorporation of farnesyl diphosphate (FPP) into sterol and nonsterol isoprene synthesis. Secondly, squalene is converted into lanosterol by the consecutive action of the squalene epoxidase ERG1 and the lanosterol synthase ERG7. Then, the delta(24)-sterol C-methyltransferase ERG6 methylates lanosterol at C-24 to produce eburicol. Eburicol is the substrate of the sterol 14-alpha demethylase encoded by CYP51A, CYP51B and CYP51C, to yield 4,4,24-trimethyl ergosta-8,14,24(28)-trienol. CYP51B encodes the enzyme primarily responsible for sterol 14-alpha-demethylation, and plays an essential role in ascospore formation. CYP51A encodes an additional sterol 14-alpha-demethylase, induced on ergosterol depletion and responsible for the intrinsic variation in azole sensitivity. The third CYP51 isoform, CYP51C, does not encode a sterol 14-alpha-demethylase, but is required for full virulence on host wheat ears. The C-14 reductase ERG24 then reduces the C14=C15 double bond which leads to 4,4-dimethylfecosterol. A sequence of further demethylations at C-4, involving the C-4 demethylation complex containing the C-4 methylsterol oxidases ERG25, the sterol-4-alpha-carboxylate 3-dehydrogenase ERG26 and the 3-keto-steroid reductase ERG27, leads to the production of fecosterol via 4-methylfecosterol. ERG28 has a role as a scaffold to help anchor ERG25, ERG26 and ERG27 to the endoplasmic reticulum. The C-8 sterol isomerase ERG2 then catalyzes the reaction which results in unsaturation at C-7 in the B ring of sterols and thus converts fecosterol to episterol. The sterol-C5-desaturases ERG3A and ERG3BB then catalyze the introduction of a C-5 double bond in the B ring to produce 5-dehydroepisterol. The C-22 sterol desaturases ERG5A and ERG5B further convert 5-dehydroepisterol into ergosta-5,7,22,24(28)-tetraen-3beta-ol by forming the C-22(23) double bond in the sterol side chain. Finally, ergosta-5,7,22,24(28)-tetraen-3beta-ol is substrate of the C-24(28) sterol reductase ERG4 to produce ergosterol. The chain is Delta(14)-sterol reductase ERG24B from Gibberella zeae (strain ATCC MYA-4620 / CBS 123657 / FGSC 9075 / NRRL 31084 / PH-1) (Wheat head blight fungus).